Here is a 57-residue protein sequence, read N- to C-terminus: Large ribosomal subunit protein bL32 (57 aa).

Belongs to the bacterial ribosomal protein bL32 family.

The polypeptide is Large ribosomal subunit protein bL32 (Mycolicibacterium gilvum (strain PYR-GCK) (Mycobacterium gilvum (strain PYR-GCK))).